Here is a 362-residue protein sequence, read N- to C-terminus: Peptide chain release factor 1 (362 aa).

Gln-237 carries the N5-methylglutamine modification. Basic and acidic residues predominate over residues 284–295 (EEEKRQAEETST). The interval 284 to 304 (EEEKRQAEETSTRRNLVASGD) is disordered.

This sequence belongs to the prokaryotic/mitochondrial release factor family. Methylated by PrmC. Methylation increases the termination efficiency of RF1.

Its subcellular location is the cytoplasm. Its function is as follows. Peptide chain release factor 1 directs the termination of translation in response to the peptide chain termination codons UAG and UAA. The chain is Peptide chain release factor 1 from Pseudoalteromonas atlantica (strain T6c / ATCC BAA-1087).